The chain runs to 115 residues: Large ribosomal subunit protein bL19 (115 aa).

Belongs to the bacterial ribosomal protein bL19 family.

Functionally, this protein is located at the 30S-50S ribosomal subunit interface and may play a role in the structure and function of the aminoacyl-tRNA binding site. This Streptococcus pneumoniae (strain JJA) protein is Large ribosomal subunit protein bL19.